Consider the following 368-residue polypeptide: MMTMWCLTLFVLWMLRVVGMHVLRYGYTGIFDDTSHMTLTVVGIFDGQHFFTYHVNSSDKASSRANGTISWMANVSAAYPTYLDGERAKGDLIFNQTEQNLLELEIALGYRSQSVLTWTHECNTTENGSFVAGYEGFGWDGETLMELKDNLTLWTGPNYEISWLKQNKTYIDGKIKNISEGDTTIQRNYLKGNCTQWSVIYSGFQTPVTHPVVKGGVRNQNDNRAEAFCTSYGFFPGEINITFIHYGNKAPDDSEPQCNPLLPTFDGTFHQGCYVAIFCNQNYTCRVTHGNWTVEIPISVTSPDDSSSGEVPDHPTANKRYNTMTISSVLLALLLCALLFAFLHYFTTLKQYLRNLAFAWRYRKVRSS.

The signal sequence occupies residues 1–19; it reads MMTMWCLTLFVLWMLRVVG. A helical transmembrane segment spans residues 326-346; the sequence is ISSVLLALLLCALLFAFLHYF.

In terms of assembly, interacts with host LILRB1.

The protein localises to the host membrane. In terms of biological role, plays a role in the protection against host NK cell cytotoxicity by interacting with and modulating the activity of the host inhibitory leukocyte Ig-like receptor 1/LILRB1, which is expressed on monocytes, dendritic cells, as well as subsets of T and NK cells. UL18 exerts an inhibitory effect on LIR-1+ NK cells, while it stimulates LIR-1- NK cell. This is Membrane glycoprotein UL18 (UL18) from Homo sapiens (Human).